The sequence spans 301 residues: Syntaxin-17 (301 aa).

Ser2 is modified (N-acetylserine). Over Ser2 to Lys227 the chain is Cytoplasmic. The residue at position 41 (Lys41) is an N6-acetyllysine. Residues Asp49–Pro128 adopt a coiled-coil conformation. Phosphotyrosine; by ABL1 is present on Tyr156. The t-SNARE coiled-coil homology domain maps to Ile161–Ala223. The chain crosses the membrane as a helical span at residues Leu228–Leu248. Residues Leu228–Ile274 form a necessary and sufficient for localization to autophagosome region. The Lumenal segment spans residues Leu249–Lys253. A helical membrane pass occupies residues Val254–Ile274. The Cytoplasmic segment spans residues Gln275–Ser301. Ser288 is modified (phosphoserine). The Endoplasmic reticulum retention signal motif lies at Lys298–Ser301.

The protein belongs to the syntaxin family. As to quaternary structure, forms a SNARE complex composed of VAMP8, SNAP29 and STX17 involved in fusion of autophagosome with lysosome. May interact with VTI1B. Probably interacts with BET1, SCFD1 and SEC22B. Interacts with PTPN2 and ABL1; involved in STX17 phosphorylation. Interacts with COPB1. Interacts with TMED9 and TMED10; the interaction is direct. Interacts with VAMP7. Interacts with RUBCNL/PACER; promoting targeting of RUBCNL/PACER to autophagosome. Interacts with VAMP8, SNAP29, VPS39 and VPS41; these interactions are increased in the absence of TMEM39A. Interacts with IRGM; promoting STX17 recruitment to autophagosomes. Interacts with ATG8 proteins GABARAP and MAP1LC3B. Interacts with RNF115; this interaction enhances STX17 stability which in turn promotes autophagosome maturation. Interacts with RAB39A (GTP-bound); the interaction promotes autophagosome-lysosome membrane fusion driven by STX17-SNAP29-VAMP8. Interacts with RAB39B; the interaction may promote a different fonction in autophagy as compared with RAB39A. Dephosphorylation by PTPN2; regulates exit from the endoplasmic reticulum. Phosphorylated at Tyr-156 probably by ABL1.

The protein resides in the endoplasmic reticulum membrane. It is found in the smooth endoplasmic reticulum membrane. Its subcellular location is the endoplasmic reticulum-Golgi intermediate compartment membrane. It localises to the cytoplasmic vesicle. The protein localises to the autophagosome membrane. The protein resides in the COPII-coated vesicle membrane. It is found in the cytoplasm. Its subcellular location is the cytosol. It localises to the mitochondrion membrane. The protein localises to the autolysosome membrane. In terms of biological role, SNAREs, soluble N-ethylmaleimide-sensitive factor-attachment protein receptors, are essential proteins for fusion of cellular membranes. SNAREs localized on opposing membranes assemble to form a trans-SNARE complex, an extended, parallel four alpha-helical bundle that drives membrane fusion. STX17 is a SNARE of the autophagosome involved in autophagy through the direct control of autophagosome membrane fusion with the lysosome membrane. May also play a role in the early secretory pathway where it may maintain the architecture of the endoplasmic reticulum-Golgi intermediate compartment/ERGIC and Golgi and/or regulate transport between the endoplasmic reticulum, the ERGIC and the Golgi. The sequence is that of Syntaxin-17 from Mus musculus (Mouse).